The primary structure comprises 278 residues: Ribosomal RNA small subunit methyltransferase A (278 aa).

The S-adenosyl-L-methionine site is built by N27, L29, G54, E75, D95, and N118.

Belongs to the class I-like SAM-binding methyltransferase superfamily. rRNA adenine N(6)-methyltransferase family. RsmA subfamily.

Its subcellular location is the cytoplasm. The catalysed reaction is adenosine(1518)/adenosine(1519) in 16S rRNA + 4 S-adenosyl-L-methionine = N(6)-dimethyladenosine(1518)/N(6)-dimethyladenosine(1519) in 16S rRNA + 4 S-adenosyl-L-homocysteine + 4 H(+). Specifically dimethylates two adjacent adenosines (A1518 and A1519) in the loop of a conserved hairpin near the 3'-end of 16S rRNA in the 30S particle. May play a critical role in biogenesis of 30S subunits. The protein is Ribosomal RNA small subunit methyltransferase A of Chlamydia abortus (strain DSM 27085 / S26/3) (Chlamydophila abortus).